Here is a 317-residue protein sequence, read N- to C-terminus: Gluconeogenesis factor (317 aa).

It belongs to the gluconeogenesis factor family.

Its subcellular location is the cytoplasm. Its function is as follows. Required for morphogenesis under gluconeogenic growth conditions. Required, in gluconeogenic growth conditions, for the correct localization of PBP1 and hence for displaying a normal rod shape. This chain is Gluconeogenesis factor (mgfK), found in Bacillus subtilis (strain 168).